We begin with the raw amino-acid sequence, 66 residues long: Large ribosomal subunit protein uL29 (66 aa).

Belongs to the universal ribosomal protein uL29 family.

The chain is Large ribosomal subunit protein uL29 from Thermococcus sibiricus (strain DSM 12597 / MM 739).